A 152-amino-acid polypeptide reads, in one-letter code: Ribosome maturation factor RimP (152 aa).

It belongs to the RimP family.

The protein localises to the cytoplasm. In terms of biological role, required for maturation of 30S ribosomal subunits. In Pseudoalteromonas atlantica (strain T6c / ATCC BAA-1087), this protein is Ribosome maturation factor RimP.